The sequence spans 373 residues: MEDFIYYNGKKYRKGYTTGTCAAAAAKACVEMILTQEEVSAVQVTTTGGTILEIPVAHQQFSKKRATAAVQKDGGDDIDATHGMWIFVDVELTNSTEVVLDGGVGIGRATQKGISVAVGEAAINPAPRKNILEAVRKSLGEHRGANILVYAPEGEERAKRTMNSNLGIIGGISILGTTGIVTPMSDEGWKKSLSMELEMKRNQGLEQIILVPGNYGDDFVQHTLGFSSNNIVSMSNFVGYMLKETQRLAFKKVLMVGHFGKLVKVSAGIFTTYSKDADARAEILVANLALLGAPLSLLQEVEKCNTTEAAGELIEEAGYTHVYEVIAQKIKARSERFLKFTKPSVEIDVVTFSTERGLLATTKDIDVLREEWQ.

It belongs to the CbiD family.

The enzyme catalyses Co-precorrin-5B + S-adenosyl-L-methionine = Co-precorrin-6A + S-adenosyl-L-homocysteine. It participates in cofactor biosynthesis; adenosylcobalamin biosynthesis; cob(II)yrinate a,c-diamide from sirohydrochlorin (anaerobic route): step 6/10. Its function is as follows. Catalyzes the methylation of C-1 in cobalt-precorrin-5B to form cobalt-precorrin-6A. This Listeria welshimeri serovar 6b (strain ATCC 35897 / DSM 20650 / CCUG 15529 / CIP 8149 / NCTC 11857 / SLCC 5334 / V8) protein is Cobalt-precorrin-5B C(1)-methyltransferase.